The sequence spans 595 residues: Aspartate--tRNA ligase (595 aa).

Residue E176 coordinates L-aspartate. Residues 200-203 (QIFK) form an aspartate region. R222 is a binding site for L-aspartate. ATP contacts are provided by residues 222 to 224 (RDE) and Q231. Position 450 (H450) interacts with L-aspartate. E484 provides a ligand contact to ATP. L-aspartate is bound at residue R491. 536–539 (GLDR) lines the ATP pocket.

Belongs to the class-II aminoacyl-tRNA synthetase family. Type 1 subfamily. In terms of assembly, homodimer.

The protein resides in the cytoplasm. The enzyme catalyses tRNA(Asp) + L-aspartate + ATP = L-aspartyl-tRNA(Asp) + AMP + diphosphate. In terms of biological role, catalyzes the attachment of L-aspartate to tRNA(Asp) in a two-step reaction: L-aspartate is first activated by ATP to form Asp-AMP and then transferred to the acceptor end of tRNA(Asp). This Halalkalibacterium halodurans (strain ATCC BAA-125 / DSM 18197 / FERM 7344 / JCM 9153 / C-125) (Bacillus halodurans) protein is Aspartate--tRNA ligase.